The primary structure comprises 874 residues: ATP-dependent RNA helicase DDX54 (874 aa).

The segment at 1–76 (MAAGRRVGPG…FPTSECVSDV (76 aa)) is disordered. Basic residues predominate over residues 20–30 (WKKKRLRKRRT). Phosphothreonine is present on T30. Residues S33, S38, S40, and S74 each carry the phosphoserine modification. Positions 39 to 50 (DSDDGEFEIQAE) are enriched in acidic residues. The Q motif signature appears at 95 to 123 (GGFQSMGLSYPVFKGIMKKGYKVPTPIQR). Positions 126–298 (IPVILDGKDV…RAGLTEPVLI (173 aa)) constitute a Helicase ATP-binding domain. 139-146 (ARTGSGKT) is an ATP binding site. The DEAD box motif lies at 246–249 (DEAD). Positions 328-472 (YLLQNVVRPQ…ARPCEEPSVA (145 aa)) constitute a Helicase C-terminal domain. Residues 581-590 (ASSKDPSSQM) are compositionally biased toward polar residues. The disordered stretch occupies residues 581–687 (ASSKDPSSQM…PKDFDSERGL (107 aa)). A compositionally biased stretch (low complexity) spans 636 to 645 (TVEGVFTEVV). Residues 664–685 (ETRQRDQEFYVPYRPKDFDSER) show a composition bias toward basic and acidic residues. Phosphoserine occurs at positions 688 and 690. A disordered region spans residues 712–874 (AQNMSRGQQQ…SRKGKMRKRM (163 aa)). Over residues 713 to 722 (QNMSRGQQQL) the composition is skewed to polar residues. 2 stretches are compositionally biased toward basic and acidic residues: residues 737 to 747 (QEDKKKIKTES) and 755 to 771 (YKRDLYQKWKQKQKIDD). A phosphoserine mark is found at S774 and S780. Positions 812–823 (MRSELKTKEQIL) are enriched in basic and acidic residues. The segment covering 864–874 (PSRKGKMRKRM) has biased composition (basic residues).

It belongs to the DEAD box helicase family. DDX54/DBP10 subfamily. Interacts in a hormone-dependent manner with nuclear receptors.

It localises to the nucleus. The protein localises to the nucleolus. It catalyses the reaction ATP + H2O = ADP + phosphate + H(+). Functionally, has RNA-dependent ATPase activity. Represses the transcriptional activity of nuclear receptors. The protein is ATP-dependent RNA helicase DDX54 (Ddx54) of Mus musculus (Mouse).